A 230-amino-acid chain; its full sequence is Secretory carrier-associated membrane protein 4 (230 aa).

The Cytoplasmic segment spans residues Met-1 to Arg-39. 4 helical membrane passes run Ile-40–Ala-60, Trp-61–Phe-81, Phe-105–Gly-125, and Val-149–Ile-169. Topologically, residues Met-170–Pro-230 are cytoplasmic. The residue at position 194 (Thr-194) is a Phosphothreonine. A disordered region spans residues Phe-208–Pro-230.

It belongs to the SCAMP family.

It is found in the membrane. In terms of biological role, probably involved in membrane protein trafficking. The protein is Secretory carrier-associated membrane protein 4 (SCAMP4) of Bos taurus (Bovine).